Consider the following 152-residue polypeptide: UPF0260 protein BR1477/BS1330_I1471 (152 aa).

This sequence belongs to the UPF0260 family.

The sequence is that of UPF0260 protein BR1477/BS1330_I1471 from Brucella suis biovar 1 (strain 1330).